The chain runs to 358 residues: Probable aminomethyltransferase (358 aa).

This sequence belongs to the GcvT family. In terms of assembly, the glycine cleavage system is composed of four proteins: P, T, L and H.

It carries out the reaction N(6)-[(R)-S(8)-aminomethyldihydrolipoyl]-L-lysyl-[protein] + (6S)-5,6,7,8-tetrahydrofolate = N(6)-[(R)-dihydrolipoyl]-L-lysyl-[protein] + (6R)-5,10-methylene-5,6,7,8-tetrahydrofolate + NH4(+). Its function is as follows. The glycine cleavage system catalyzes the degradation of glycine. In Natronomonas pharaonis (strain ATCC 35678 / DSM 2160 / CIP 103997 / JCM 8858 / NBRC 14720 / NCIMB 2260 / Gabara) (Halobacterium pharaonis), this protein is Probable aminomethyltransferase.